Here is a 389-residue protein sequence, read N- to C-terminus: Urea transporter 1 (389 aa).

5 consecutive transmembrane segments (helical) span residues 53–73 (PVVL…VFVN), 91–110 (WWAL…ALLL), 116–136 (LIAS…MAVF), 143–163 (FWWL…FSSA), and 173–193 (LPVF…ATGH). N211 carries an N-linked (GlcNAc...) asparagine glycan. Helical transmembrane passes span 242–262 (GGIF…HAAI), 281–301 (IYFG…GGMF), 310–330 (LLAL…ANFM), and 333–353 (VGLP…LIMT).

Belongs to the urea transporter family. In terms of assembly, homotrimer; each subunit contains a pore through which urea permeates. Identified in a complex with STOM. As to expression, detected in erythrocytes (at protein level). Expressed in spleen erythroblasts and tumoral kidney.

Its subcellular location is the cell membrane. The protein resides in the basolateral cell membrane. It catalyses the reaction urea(in) = urea(out). Its activity is regulated as follows. Inhibited by phloretin and para-chloromercuribenzene sulfonate. Its function is as follows. Mediates the transport of urea driven by a concentration gradient across the cell membrane of erythrocytes. Also mediates the transport of urea across the cell membrane of the renal inner medullary collecting duct which is critical to the urinary concentrating mechanism. Facilitates water transport in erythrocytes. This is Urea transporter 1 (SLC14A1) from Homo sapiens (Human).